The sequence spans 124 residues: Large ribosomal subunit protein bL21 (124 aa).

The protein belongs to the bacterial ribosomal protein bL21 family. As to quaternary structure, part of the 50S ribosomal subunit. Contacts protein L20.

Its function is as follows. This protein binds to 23S rRNA in the presence of protein L20. In Synechococcus sp. (strain WH7803), this protein is Large ribosomal subunit protein bL21.